A 178-amino-acid chain; its full sequence is Large ribosomal subunit protein uL6 (178 aa).

It belongs to the universal ribosomal protein uL6 family. As to quaternary structure, part of the 50S ribosomal subunit.

In terms of biological role, this protein binds to the 23S rRNA, and is important in its secondary structure. It is located near the subunit interface in the base of the L7/L12 stalk, and near the tRNA binding site of the peptidyltransferase center. This chain is Large ribosomal subunit protein uL6, found in Halalkalibacterium halodurans (strain ATCC BAA-125 / DSM 18197 / FERM 7344 / JCM 9153 / C-125) (Bacillus halodurans).